Reading from the N-terminus, the 554-residue chain is Dihydroxy-acid dehydratase (554 aa).

Position 78 (Asp-78) interacts with Mg(2+). [2Fe-2S] cluster is bound at residue Cys-119. Positions 120 and 121 each coordinate Mg(2+). Lys-121 bears the N6-carboxylysine mark. Cys-191 lines the [2Fe-2S] cluster pocket. Glu-442 provides a ligand contact to Mg(2+). The active-site Proton acceptor is Ser-468.

Belongs to the IlvD/Edd family. As to quaternary structure, homodimer. It depends on [2Fe-2S] cluster as a cofactor. Requires Mg(2+) as cofactor.

The catalysed reaction is (2R)-2,3-dihydroxy-3-methylbutanoate = 3-methyl-2-oxobutanoate + H2O. It carries out the reaction (2R,3R)-2,3-dihydroxy-3-methylpentanoate = (S)-3-methyl-2-oxopentanoate + H2O. Its pathway is amino-acid biosynthesis; L-isoleucine biosynthesis; L-isoleucine from 2-oxobutanoate: step 3/4. The protein operates within amino-acid biosynthesis; L-valine biosynthesis; L-valine from pyruvate: step 3/4. Its function is as follows. Functions in the biosynthesis of branched-chain amino acids. Catalyzes the dehydration of (2R,3R)-2,3-dihydroxy-3-methylpentanoate (2,3-dihydroxy-3-methylvalerate) into 2-oxo-3-methylpentanoate (2-oxo-3-methylvalerate) and of (2R)-2,3-dihydroxy-3-methylbutanoate (2,3-dihydroxyisovalerate) into 2-oxo-3-methylbutanoate (2-oxoisovalerate), the penultimate precursor to L-isoleucine and L-valine, respectively. This Thermotoga petrophila (strain ATCC BAA-488 / DSM 13995 / JCM 10881 / RKU-1) protein is Dihydroxy-acid dehydratase.